Reading from the N-terminus, the 387-residue chain is Chorismate synthase (387 aa).

Residues Arg39 and Arg45 each contribute to the NADP(+) site. Residues 92–113 (PVEEGSEEKRRVSRPRPGHADL) are disordered. Residues 130-132 (RSS), 250-251 (QA), Gly295, 310-314 (KPIPT), and Arg336 each bind FMN.

This sequence belongs to the chorismate synthase family. Homotetramer. Requires FMNH2 as cofactor.

The enzyme catalyses 5-O-(1-carboxyvinyl)-3-phosphoshikimate = chorismate + phosphate. It participates in metabolic intermediate biosynthesis; chorismate biosynthesis; chorismate from D-erythrose 4-phosphate and phosphoenolpyruvate: step 7/7. Functionally, catalyzes the anti-1,4-elimination of the C-3 phosphate and the C-6 proR hydrogen from 5-enolpyruvylshikimate-3-phosphate (EPSP) to yield chorismate, which is the branch point compound that serves as the starting substrate for the three terminal pathways of aromatic amino acid biosynthesis. This reaction introduces a second double bond into the aromatic ring system. The polypeptide is Chorismate synthase (Brevibacillus brevis (strain 47 / JCM 6285 / NBRC 100599)).